We begin with the raw amino-acid sequence, 316 residues long: Ribosomal protein L11 methyltransferase (316 aa).

4 residues coordinate S-adenosyl-L-methionine: Thr-157, Gly-178, Asp-200, and Asn-243.

It belongs to the methyltransferase superfamily. PrmA family.

It is found in the cytoplasm. It catalyses the reaction L-lysyl-[protein] + 3 S-adenosyl-L-methionine = N(6),N(6),N(6)-trimethyl-L-lysyl-[protein] + 3 S-adenosyl-L-homocysteine + 3 H(+). Methylates ribosomal protein L11. This is Ribosomal protein L11 methyltransferase from Streptococcus pneumoniae (strain JJA).